Here is a 226-residue protein sequence, read N- to C-terminus: UPF0111 protein HI_1603 (226 aa).

The protein belongs to the UPF0111 family.

The sequence is that of UPF0111 protein HI_1603 from Haemophilus influenzae (strain ATCC 51907 / DSM 11121 / KW20 / Rd).